The following is a 362-amino-acid chain: 3-isopropylmalate dehydrogenase (362 aa).

78 to 91 is a binding site for NAD(+); sequence GYKWDSLPPHQRPE. Substrate contacts are provided by Arg-98, Arg-108, Arg-136, and Asp-226. Asp-226, Asp-250, and Asp-254 together coordinate Mg(2+). 284 to 296 is a binding site for NAD(+); sequence GSAPDIAGLDKAN.

Belongs to the isocitrate and isopropylmalate dehydrogenases family. LeuB type 1 subfamily. In terms of assembly, homodimer. Mg(2+) serves as cofactor. Mn(2+) is required as a cofactor.

It is found in the cytoplasm. The catalysed reaction is (2R,3S)-3-isopropylmalate + NAD(+) = 4-methyl-2-oxopentanoate + CO2 + NADH. It participates in amino-acid biosynthesis; L-leucine biosynthesis; L-leucine from 3-methyl-2-oxobutanoate: step 3/4. Its function is as follows. Catalyzes the oxidation of 3-carboxy-2-hydroxy-4-methylpentanoate (3-isopropylmalate) to 3-carboxy-4-methyl-2-oxopentanoate. The product decarboxylates to 4-methyl-2 oxopentanoate. This Trichormus variabilis (strain ATCC 29413 / PCC 7937) (Anabaena variabilis) protein is 3-isopropylmalate dehydrogenase.